The sequence spans 436 residues: GTPase Der (436 aa).

EngA-type G domains lie at 4–167 (PVVA…PKDA) and 175–351 (IKFS…DNHE). GTP contacts are provided by residues 10 to 17 (GRPNVGKS), 57 to 61 (DTGGI), 119 to 122 (NKVD), 181 to 188 (GRPNVGKS), 229 to 233 (DTAGI), and 294 to 297 (NKWD). The KH-like domain maps to 352 to 436 (QRISSAVLND…PIHIIERRRK (85 aa)).

Belongs to the TRAFAC class TrmE-Era-EngA-EngB-Septin-like GTPase superfamily. EngA (Der) GTPase family. As to quaternary structure, associates with the 50S ribosomal subunit.

Functionally, GTPase that plays an essential role in the late steps of ribosome biogenesis. The chain is GTPase Der from Ligilactobacillus salivarius (strain UCC118) (Lactobacillus salivarius).